The chain runs to 102 residues: Small ribosomal subunit protein uS10 (102 aa).

It belongs to the universal ribosomal protein uS10 family. In terms of assembly, part of the 30S ribosomal subunit.

Its function is as follows. Involved in the binding of tRNA to the ribosomes. The sequence is that of Small ribosomal subunit protein uS10 from Bifidobacterium adolescentis (strain ATCC 15703 / DSM 20083 / NCTC 11814 / E194a).